Consider the following 282-residue polypeptide: Heat stress transcription factor A-7b (282 aa).

Low complexity-rich tracts occupy residues 1 to 11 (MDPSSSSRARS) and 120 to 134 (SSSS…QSQP). Disordered regions lie at residues 1-24 (MDPS…LQEA) and 117-139 (RRTS…AHDP). The DNA-binding element occupies 26–120 (PSPFLTKTFE…LLKSIKRRTS (95 aa)). The hydrophobic repeat HR-A/B stretch occupies residues 137 to 196 (HDPGVELPQLREERHVLMMEISTLRQEEQRARGYVQAMEQRINGAEKKQRHMMSFLRRAV). The short motif at 208-212 (QKRDR) is the Nuclear localization signal element. A Nuclear export signal motif is present at residues 232 to 240 (LSELEALAL). Positions 259–268 (DGFWEELLMN) match the AHA motif.

Belongs to the HSF family. Class A subfamily. Homotrimer. Exhibits temperature-dependent phosphorylation.

Its subcellular location is the cytoplasm. It localises to the nucleus. Transcriptional activator that specifically binds DNA sequence 5'-AGAAnnTTCT-3' known as heat shock promoter elements (HSE). The sequence is that of Heat stress transcription factor A-7b (HSFA7B) from Arabidopsis thaliana (Mouse-ear cress).